A 406-amino-acid polypeptide reads, in one-letter code: Cysteine desulfurase (406 aa).

Residue Lys226 is modified to N6-(pyridoxal phosphate)lysine. Cys364 (cysteine persulfide intermediate) is an active-site residue.

Belongs to the class-V pyridoxal-phosphate-dependent aminotransferase family. Csd subfamily. Homodimer. Interacts with SufE and the SufBCD complex composed of SufB, SufC and SufD. The interaction with SufE is required to mediate the direct transfer of the sulfur atom from the S-sulfanylcysteine. It depends on pyridoxal 5'-phosphate as a cofactor.

It localises to the cytoplasm. The enzyme catalyses (sulfur carrier)-H + L-cysteine = (sulfur carrier)-SH + L-alanine. It catalyses the reaction L-selenocysteine + AH2 = hydrogenselenide + L-alanine + A + H(+). It participates in cofactor biosynthesis; iron-sulfur cluster biosynthesis. In terms of biological role, cysteine desulfurases mobilize the sulfur from L-cysteine to yield L-alanine, an essential step in sulfur metabolism for biosynthesis of a variety of sulfur-containing biomolecules. Component of the suf operon, which is activated and required under specific conditions such as oxidative stress and iron limitation. Acts as a potent selenocysteine lyase in vitro, that mobilizes selenium from L-selenocysteine. Selenocysteine lyase activity is however unsure in vivo. In Salmonella gallinarum (strain 287/91 / NCTC 13346), this protein is Cysteine desulfurase.